Here is a 1004-residue protein sequence, read N- to C-terminus: NADH:acrylate oxidoreductase (1004 aa).

Position 455 is an FMN phosphoryl threonine (Thr455). FAD-binding residues include Ala508, Glu527, Asn535, Thr536, Gly540, Gly541, and Asp775. Residue Arg834 is the Proton donor of the active site. His941, Glu970, Ala985, and Leu986 together coordinate FAD.

It belongs to the FAD-dependent oxidoreductase 2 family. FRD/SDH subfamily. FAD serves as cofactor. Requires FMN as cofactor. Is flavinylated on Thr-455 by ApbE, encoded in a neighboring gene. Flavinylation is essential for catalytic activity.

The enzyme catalyses acrylate + NADH + H(+) = propanoate + NAD(+). Catalyzes the NADH-dependent reduction of acrylate to propanoate. The principal role of ARD in Vibrio seems to be the energy-saving detoxification of acrylate coming from the environment. May also use acrylate as the terminal electron acceptor for NADH regeneration at oxygen deficiency. NADPH cannot replace NADH as the electron donor. Is also able to reduce methacrylate in vitro, but with a much lower efficiency. This chain is NADH:acrylate oxidoreductase, found in Vibrio harveyi (Beneckea harveyi).